Consider the following 265-residue polypeptide: Aliphatic sulfonates import ATP-binding protein SsuB 1 (265 aa).

An ABC transporter domain is found at Phe31–Leu255. Gly63–Ser70 is an ATP binding site.

It belongs to the ABC transporter superfamily. Aliphatic sulfonates importer (TC 3.A.1.17.2) family. In terms of assembly, the complex is composed of two ATP-binding proteins (SsuB), two transmembrane proteins (SsuC) and a solute-binding protein (SsuA).

It localises to the cell inner membrane. It catalyses the reaction ATP + H2O + aliphatic sulfonate-[sulfonate-binding protein]Side 1 = ADP + phosphate + aliphatic sulfonateSide 2 + [sulfonate-binding protein]Side 1.. Part of the ABC transporter complex SsuABC involved in aliphatic sulfonates import. Responsible for energy coupling to the transport system. The sequence is that of Aliphatic sulfonates import ATP-binding protein SsuB 1 from Mesorhizobium japonicum (strain LMG 29417 / CECT 9101 / MAFF 303099) (Mesorhizobium loti (strain MAFF 303099)).